The chain runs to 87 residues: Large ribosomal subunit protein bL27 (87 aa).

The protein belongs to the bacterial ribosomal protein bL27 family.

The polypeptide is Large ribosomal subunit protein bL27 (Dechloromonas aromatica (strain RCB)).